Here is a 105-residue protein sequence, read N- to C-terminus: Large ribosomal subunit protein uL24 (105 aa).

This sequence belongs to the universal ribosomal protein uL24 family. Part of the 50S ribosomal subunit.

Functionally, one of two assembly initiator proteins, it binds directly to the 5'-end of the 23S rRNA, where it nucleates assembly of the 50S subunit. One of the proteins that surrounds the polypeptide exit tunnel on the outside of the subunit. This Azoarcus sp. (strain BH72) protein is Large ribosomal subunit protein uL24.